The following is a 162-amino-acid chain: Tegument protein BLRF2 (162 aa).

Residues 12 to 43 (VKAVDMSMEDMAARLARLESENKALKQQVLRG) adopt a coiled-coil conformation. Residues 118-162 (SMLGAKGQPSPGEGTRPRESNDPNATRRARSRSRGREAKKVQISD) are disordered. Over residues 151-162 (RGREAKKVQISD) the composition is skewed to basic and acidic residues.

The protein belongs to the herpesviridae BLRF2 family. In terms of assembly, homooligomer; homooligomerizes and binds double-stranded DNA (dsDNA) cooperatively. Interacts with host CGAS.

The protein localises to the virion tegument. It is found in the host cytoplasm. Its function is as follows. Plays a role in the inhibition of host innate immune system by targeting the CGAS enzymatic activity which is the principal cytosolic DNA sensor that detects invading viral DNA. Acts by inhibiting CGAS-DNA phase separation: directly binds double-stranded DNA (dsDNA) in a length dependent but sequence independent manner and is able to form DNA-induced phase separation in infected cells. DNA phase separation of ORF52 mediates disruption of liquid-like droplets in which CGAS is activated, thereby preventing CGAS activity. The chain is Tegument protein BLRF2 from Homo sapiens (Human).